A 739-amino-acid chain; its full sequence is POU domain, class 2, transcription factor 1 (739 aa).

The span at M1–S11 shows a compositional bias: polar residues. 5 disordered regions span residues M1–I39, S67–A95, T253–S277, D353–K378, and S489–L553. The segment covering S81–A95 has biased composition (low complexity). One can recognise a POU-specific domain in the interval E274–E348. Positions D353–S364 are enriched in low complexity. A DNA-binding region (homeobox) is located at residues R375 to N434. Positions S489–P552 are enriched in low complexity.

It belongs to the POU transcription factor family. Class-2 subfamily. As to quaternary structure, interacts with NR3C1, AR and PGR.

The protein resides in the nucleus. Transcription factor that binds to the octamer motif (5'-ATTTGCAT-3') and activates the promoters of the genes for some small nuclear RNAs (snRNA) and of genes such as those for histone H2B and immunoglobulins. Modulates transcription transactivation by NR3C1, AR and PGR. In Gallus gallus (Chicken), this protein is POU domain, class 2, transcription factor 1 (POU2F1).